A 387-amino-acid chain; its full sequence is Eukaryotic translation initiation factor 3 subunit M (387 aa).

One can recognise a PCI domain in the interval 181-340; it reads LSSKVMIELL…RKVHISSTMH (160 aa).

The protein belongs to the eIF-3 subunit M family. As to quaternary structure, component of the eukaryotic translation initiation factor 3 (eIF-3) complex. The eIF-3 complex interacts with pix.

Its subcellular location is the cytoplasm. It is found in the golgi apparatus. Component of the eukaryotic translation initiation factor 3 (eIF-3) complex, which is involved in protein synthesis of a specialized repertoire of mRNAs and, together with other initiation factors, stimulates binding of mRNA and methionyl-tRNAi to the 40S ribosome. The eIF-3 complex specifically targets and initiates translation of a subset of mRNAs involved in cell proliferation. This Drosophila grimshawi (Hawaiian fruit fly) protein is Eukaryotic translation initiation factor 3 subunit M.